The primary structure comprises 865 residues: Alanine--tRNA ligase (865 aa).

Zn(2+) contacts are provided by H554, H558, C656, and H660.

The protein belongs to the class-II aminoacyl-tRNA synthetase family. It depends on Zn(2+) as a cofactor.

It localises to the cytoplasm. It carries out the reaction tRNA(Ala) + L-alanine + ATP = L-alanyl-tRNA(Ala) + AMP + diphosphate. In terms of biological role, catalyzes the attachment of alanine to tRNA(Ala) in a two-step reaction: alanine is first activated by ATP to form Ala-AMP and then transferred to the acceptor end of tRNA(Ala). Also edits incorrectly charged Ser-tRNA(Ala) and Gly-tRNA(Ala) via its editing domain. This chain is Alanine--tRNA ligase, found in Francisella tularensis subsp. mediasiatica (strain FSC147).